Reading from the N-terminus, the 130-residue chain is Small ribosomal subunit protein uS8 (130 aa).

At lysine 88 the chain carries N6-succinyllysine.

The protein belongs to the universal ribosomal protein uS8 family. Component of the small ribosomal subunit. Part of the small subunit (SSU) processome, composed of more than 70 proteins and the RNA chaperone small nucleolar RNA (snoRNA) U3.

The protein resides in the cytoplasm. The protein localises to the nucleus. It localises to the nucleolus. Component of the small ribosomal subunit. The ribosome is a large ribonucleoprotein complex responsible for the synthesis of proteins in the cell. Part of the small subunit (SSU) processome, first precursor of the small eukaryotic ribosomal subunit. During the assembly of the SSU processome in the nucleolus, many ribosome biogenesis factors, an RNA chaperone and ribosomal proteins associate with the nascent pre-rRNA and work in concert to generate RNA folding, modifications, rearrangements and cleavage as well as targeted degradation of pre-ribosomal RNA by the RNA exosome. Required for proper erythropoiesis. The sequence is that of Small ribosomal subunit protein uS8 (Rps15a) from Mus musculus (Mouse).